The following is a 95-amino-acid chain: uncharacterized protein (95 aa).

This is an uncharacterized protein from Enterobacteria phage T4 (Bacteriophage T4).